We begin with the raw amino-acid sequence, 282 residues long: Heat stress transcription factor A-7b (282 aa).

Composition is skewed to low complexity over residues 1-11 and 120-134; these read MDPSSSSRARS and SSSS…QSQP. Disordered stretches follow at residues 1-24 and 117-139; these read MDPS…LQEA and RRTS…AHDP. A DNA-binding region spans residues 26 to 120; sequence PSPFLTKTFE…LLKSIKRRTS (95 aa). The tract at residues 137-196 is hydrophobic repeat HR-A/B; it reads HDPGVELPQLREERHVLMMEISTLRQEEQRARGYVQAMEQRINGAEKKQRHMMSFLRRAV. The short motif at 208–212 is the Nuclear localization signal element; it reads QKRDR. The Nuclear export signal motif lies at 232–240; sequence LSELEALAL. Residues 259–268 carry the AHA motif; it reads DGFWEELLMN.

The protein belongs to the HSF family. Class A subfamily. As to quaternary structure, homotrimer. Exhibits temperature-dependent phosphorylation.

It localises to the cytoplasm. Its subcellular location is the nucleus. Its function is as follows. Transcriptional activator that specifically binds DNA sequence 5'-AGAAnnTTCT-3' known as heat shock promoter elements (HSE). This is Heat stress transcription factor A-7b (HSFA7B) from Arabidopsis thaliana (Mouse-ear cress).